Reading from the N-terminus, the 574-residue chain is MDVRRRPVKPLYPSEHISSGEPLKPHNQDSSVKASDALPLPLYLTNGLFFTMFFSVMYFLLHRWREKIRNGIPLHVLNFSELVAMVSLIASVIYLLGFFGIGFVQSFVSKGNNDSWDVEDESPEQFIDRTVTPPPVRRNIPMKSVPVAEKTAQIITPFSSEDDEVVIKSVVEGRIPSYSLESKLGDCKRAAFIRKEALQRSSGKSLEGLPLDGFDYESILGQCCEMPIGYIQIPVGIAGPLLLNGKEFSVPMATTEGCLVASTNRGCKAIYVSGGATSVLFRDAMTRAPVVRFGSAKRAAELKFFVEDPMNFETLSVVFNKSSRFARLQNIQCAIAGKNLYMRFSCSTGDAMGMNMVSKGVQNVLDYLQNEYPDMDIIGISGNYCSDKKPAAVNWIEGRGKSVVCEAIIKEDVVKKVLKTEVATLVELNMLKNLTGSAMAGALGGFNAHASNIVSAVYLATGQDPAQNIESSHCITMMEAVNDGKDLHISVTMPSIEVGTVGGGTQLASQSACLNLLGVKGANREAPGSNARLLATIVAGSVLAGELSLMSAISAGQLVKSHMKYNRSCKDVTK.

Positions 1–30 are disordered; sequence MDVRRRPVKPLYPSEHISSGEPLKPHNQDS. The helical transmembrane segment at 41–61 threads the bilayer; sequence PLYLTNGLFFTMFFSVMYFLL. The N-linked (GlcNAc...) asparagine glycan is linked to Asn78. A helical membrane pass occupies residues 83-103; the sequence is VAMVSLIASVIYLLGFFGIGF. The linker stretch occupies residues 104–161; sequence VQSFVSKGNNDSWDVEDESPEQFIDRTVTPPPVRRNIPMKSVPVAEKTAQIITPFSSE. A glycan (N-linked (GlcNAc...) asparagine) is linked at Asn113. Residues 162-574 are catalytic; it reads DDEVVIKSVV…YNRSCKDVTK (413 aa). The active-site Charge relay system is Glu256. A glycan (N-linked (GlcNAc...) asparagine) is linked at Asn320. Residue Lys388 is the Charge relay system of the active site. Asn433 carries N-linked (GlcNAc...) asparagine glycosylation. Asp464 serves as the catalytic Charge relay system. His562 functions as the Proton donor in the catalytic mechanism. The N-linked (GlcNAc...) asparagine glycan is linked to Asn566.

It belongs to the HMG-CoA reductase family. In terms of tissue distribution, expressed in mature petals and anthers.

It localises to the endoplasmic reticulum membrane. It catalyses the reaction (R)-mevalonate + 2 NADP(+) + CoA = (3S)-3-hydroxy-3-methylglutaryl-CoA + 2 NADPH + 2 H(+). It participates in metabolic intermediate biosynthesis; (R)-mevalonate biosynthesis; (R)-mevalonate from acetyl-CoA: step 3/3. In terms of biological role, catalyzes the synthesis of mevalonate. The specific precursor of all isoprenoid compounds present in plants. The polypeptide is 3-hydroxy-3-methylglutaryl-coenzyme A reductase 3 (HMG3) (Solanum tuberosum (Potato)).